Reading from the N-terminus, the 402-residue chain is Apolipoprotein L3 (402 aa).

Belongs to the apolipoprotein L family. As to expression, widely expressed; the highest levels are in prostate, lung and placenta; also detected in kidney, bone marrow, spleen, thymus, spinal cord, adrenal gland, salivary gland, trachea and mammary gland; levels are low in brain, heart, fetal liver, pancreas and testis.

It is found in the cytoplasm. May affect the movement of lipids in the cytoplasm or allow the binding of lipids to organelles. The protein is Apolipoprotein L3 (APOL3) of Homo sapiens (Human).